A 59-amino-acid polypeptide reads, in one-letter code: MAVQQNKKSPSKRGMHRAHDFLTAPVIAIEPSTGEAHRRHHISPNGFYRGRKVVKGKDE.

The disordered stretch occupies residues 1–59; the sequence is MAVQQNKKSPSKRGMHRAHDFLTAPVIAIEPSTGEAHRRHHISPNGFYRGRKVVKGKDE. Positions 49–59 are enriched in basic residues; sequence RGRKVVKGKDE.

This sequence belongs to the bacterial ribosomal protein bL32 family.

The protein is Large ribosomal subunit protein bL32 of Laribacter hongkongensis (strain HLHK9).